The sequence spans 31 residues: Cytochrome b6-f complex subunit 6 (31 aa).

Residues 3–23 (LIIGYIILLACAFGLAAGLYF) traverse the membrane as a helical segment.

It belongs to the PetL family. In terms of assembly, the 4 large subunits of the cytochrome b6-f complex are cytochrome b6, subunit IV (17 kDa polypeptide, PetD), cytochrome f and the Rieske protein, while the 4 small subunits are PetG, PetL, PetM and PetN. The complex functions as a dimer.

It is found in the plastid. The protein resides in the chloroplast thylakoid membrane. Functionally, component of the cytochrome b6-f complex, which mediates electron transfer between photosystem II (PSII) and photosystem I (PSI), cyclic electron flow around PSI, and state transitions. PetL is important for photoautotrophic growth as well as for electron transfer efficiency and stability of the cytochrome b6-f complex. This is Cytochrome b6-f complex subunit 6 from Guillardia theta (Cryptophyte).